The primary structure comprises 91 residues: CRISPR-associated endoribonuclease Cas2 2 (91 aa).

Asp-6 contacts Mg(2+).

Belongs to the CRISPR-associated endoribonuclease Cas2 protein family. As to quaternary structure, homodimer, forms a heterotetramer with a Cas1 homodimer. The cofactor is Mg(2+).

In terms of biological role, CRISPR (clustered regularly interspaced short palindromic repeat), is an adaptive immune system that provides protection against mobile genetic elements (viruses, transposable elements and conjugative plasmids). CRISPR clusters contain sequences complementary to antecedent mobile elements and target invading nucleic acids. CRISPR clusters are transcribed and processed into CRISPR RNA (crRNA). Functions as a ssRNA-specific endoribonuclease. Involved in the integration of spacer DNA into the CRISPR cassette. The protein is CRISPR-associated endoribonuclease Cas2 2 of Moorella thermoacetica (strain ATCC 39073 / JCM 9320).